A 511-amino-acid polypeptide reads, in one-letter code: ATP synthase subunit beta, mitochondrial (511 aa).

The transit peptide at 1 to 33 (MVLPRLYTATSRAAFKAAKQSAPLLSTSWKRCM) directs the protein to the mitochondrion. A Phosphothreonine modification is found at Thr-112. An ATP-binding site is contributed by 190-197 (GGAGVGKT). Thr-237 bears the Phosphothreonine mark. Ser-373 is subject to Phosphoserine.

Belongs to the ATPase alpha/beta chains family. F-type ATPases have 2 components, CF(1) - the catalytic core - and CF(0) - the membrane proton channel. CF(1) has five subunits: alpha(3), beta(3), gamma(1), delta(1), epsilon(1). CF(0) has three main subunits: a, b and c.

Its subcellular location is the mitochondrion. The protein resides in the mitochondrion inner membrane. The catalysed reaction is ATP + H2O + 4 H(+)(in) = ADP + phosphate + 5 H(+)(out). In terms of biological role, mitochondrial membrane ATP synthase (F(1)F(0) ATP synthase or Complex V) produces ATP from ADP in the presence of a proton gradient across the membrane which is generated by electron transport complexes of the respiratory chain. F-type ATPases consist of two structural domains, F(1) - containing the extramembraneous catalytic core, and F(0) - containing the membrane proton channel, linked together by a central stalk and a peripheral stalk. During catalysis, ATP synthesis in the catalytic domain of F(1) is coupled via a rotary mechanism of the central stalk subunits to proton translocation. Subunits alpha and beta form the catalytic core in F(1). Rotation of the central stalk against the surrounding alpha(3)beta(3) subunits leads to hydrolysis of ATP in three separate catalytic sites on the beta subunits. This is ATP synthase subunit beta, mitochondrial (ATP2) from Saccharomyces cerevisiae (strain ATCC 204508 / S288c) (Baker's yeast).